Consider the following 524-residue polypeptide: Inosine-5'-monophosphate dehydrogenase 4 (524 aa).

2 CBS domains span residues 122–183 and 185–241; these read FINS…VVSE and MTKN…PLAS. S125 bears the Phosphoserine mark. Residues 279–281 and 329–331 each bind NAD(+); these read DSS and GMG. The K(+) site is built by G331 and G333. S334 provides a ligand contact to IMP. Position 336 (C336) interacts with K(+). The active-site Thioimidate intermediate is C336. IMP contacts are provided by residues 369-371, 392-393, and 416-420; these read DGG, GG, and YRGMG. The Proton acceptor role is filled by R438. Residue Q450 coordinates IMP. E509, G510, and G511 together coordinate K(+).

This sequence belongs to the IMPDH/GMPR family. In terms of assembly, homotetramer. Seems to be able to form heterotetramers composed from more than 1 of the 3 IMPDH gene products (IMD2-4). K(+) is required as a cofactor.

Its subcellular location is the cytoplasm. It carries out the reaction IMP + NAD(+) + H2O = XMP + NADH + H(+). The protein operates within purine metabolism; XMP biosynthesis via de novo pathway; XMP from IMP: step 1/1. Its activity is regulated as follows. Mycophenolic acid (MPA) is a non-competitive inhibitor that prevents formation of the closed enzyme conformation by binding to the same site as the amobile flap. In contrast, mizoribine monophosphate (MZP) is a competitive inhibitor that induces the closed conformation. MPA is a potent inhibitor of mammalian IMPDHs but a poor inhibitor of the bacterial enzymes. MZP is a more potent inhibitor of bacterial IMPDH. Catalyzes the conversion of inosine 5'-phosphate (IMP) to xanthosine 5'-phosphate (XMP), the first committed and rate-limiting step in the de novo synthesis of guanine nucleotides, and therefore plays an important role in the regulation of cell growth. The chain is Inosine-5'-monophosphate dehydrogenase 4 from Saccharomyces cerevisiae (strain ATCC 204508 / S288c) (Baker's yeast).